The chain runs to 196 residues: Probable malonic semialdehyde reductase RutE (196 aa).

It belongs to the nitroreductase family. HadB/RutE subfamily. FMN is required as a cofactor.

It catalyses the reaction 3-hydroxypropanoate + NADP(+) = 3-oxopropanoate + NADPH + H(+). May reduce toxic product malonic semialdehyde to 3-hydroxypropionic acid, which is excreted. The chain is Probable malonic semialdehyde reductase RutE from Klebsiella pneumoniae subsp. pneumoniae (strain ATCC 700721 / MGH 78578).